We begin with the raw amino-acid sequence, 312 residues long: Olfactory receptor 5p57 (312 aa).

Topologically, residues 1–25 (MEPGNYTVVTEFILLGLTDDITVSV) are extracellular. Asn-5 carries N-linked (GlcNAc...) asparagine glycosylation. The helical transmembrane segment at 26–46 (ILFVMFLIVYSVTLMGNLNII) threads the bilayer. The Cytoplasmic segment spans residues 47–54 (VLIRTSPQ). The helical transmembrane segment at 55-75 (LHTPMYLFLSHLAFLDIGYSS) threads the bilayer. The Extracellular portion of the chain corresponds to 76–99 (SVTPIMLRGFLRKGTFIPVAGCVA). Cys-97 and Cys-189 are joined by a disulfide. Residues 100–120 (QLCIVVAFGTSESFLLASMAY) form a helical membrane-spanning segment. Over 121 to 133 (DRYVAICSPLLYS) the chain is Cytoplasmic. The chain crosses the membrane as a helical span at residues 134 to 154 (TQMSSTVCILLVGTSYLGGWV). Topologically, residues 155–196 (NAWIFTGCSLNLSFCGPNKINHFFCDYSPLLKLSCSHDFSFE) are extracellular. N-linked (GlcNAc...) asparagine glycosylation is present at Asn-165. The helical transmembrane segment at 197–217 (VIPAISSGSIIVVTVFIIALS) threads the bilayer. Residues 218-237 (YVYILVSILKMRSTEGRQKA) lie on the Cytoplasmic side of the membrane. The chain crosses the membrane as a helical span at residues 238–258 (FSTCTSHLTAVTLFFGTITFI). The Extracellular portion of the chain corresponds to 259 to 271 (YVMPQSSYSTDQN). A helical membrane pass occupies residues 272–292 (KVVSVFYTVVIPMLNPLIYSF). At 293 to 312 (RNKEVKEAMKKLIAKTHWWS) the chain is on the cytoplasmic side.

It belongs to the G-protein coupled receptor 1 family.

Its subcellular location is the cell membrane. Probable odorant receptor, which recognizes only aliphatic alcohols, suggesting that it may convey a 'woody' or 'sweet' sour. The chain is Olfactory receptor 5p57 from Mus musculus (Mouse).